We begin with the raw amino-acid sequence, 375 residues long: MTIIPKHPSPTLFKPLALGKCQLQHRIVMSPTTRYRADEAAVPLPFVKEYYAQRASDPGALLITEATNICPNSVGEAHIPGIWSKTQCEAWREVVSQVHAKECYIFCQIYATGRSADPELLASRGFEQVSSSAVAAEPGCQPPRALDEEEIQKYISDYAQAARNAIEVGFDGVEIHGANGYLIDQFTQASCNQRTDEWGGDIPNRARFALQVTMAVINAIGPDRVGMKLSPWSQYSGMGIMGDLVPQFEYLILQLRQLGIAYLHLANSRWLDQMTTHPDPNHLTFVKVWGRSLPVILAGGYDATSAPEVIEMVYADYDNVAIGFGRYFTSTPDLPFRMKNGIALQKYDRSSFYTCLTKTGYLDYPYSPEYLCRSS.

FMN is bound by residues 31-33 (PTT), A66, Q108, and H176. Positions 176 and 179 each coordinate substrate. The active-site Proton donor is the Y181. FMN is bound by residues K228, G300, 325 to 326 (GR), and R326. Y353 is a substrate binding site.

The protein belongs to the NADH:flavin oxidoreductase/NADH oxidase family. The cofactor is FMN.

The enzyme catalyses dihydrochanoclavine-I aldehyde + NADP(+) = chanoclavine-I aldehyde + NADPH + H(+). The protein operates within alkaloid biosynthesis; ergot alkaloid biosynthesis. Its function is as follows. Chanoclavine-I aldehyde reductase; part of the gene cluster that mediates the biosynthesis of isofumigaclavines, fungal ergot alkaloids. The tryptophan dimethylallyltransferase ifgA catalyzes the first step of ergot alkaloid biosynthesis by condensing dimethylallyl diphosphate (DMAP) and tryptophan to form 4-dimethylallyl-L-tryptophan. The second step is catalyzed by the methyltransferase ifgB that methylates 4-dimethylallyl-L-tryptophan in the presence of S-adenosyl-L-methionine, resulting in the formation of N-methyl-dimethylallyl-L-tryptophan. The catalase ifgD and the FAD-dependent oxidoreductase ifgC then transform N-methyl-dimethylallyl-L-tryptophan to chanoclavine-I which is further oxidized by ifgE in the presence of NAD(+), resulting in the formation of chanoclavine-I aldehyde. The chanoclavine-I aldehyde reductases ifgG and/or fgaOx3 reduce chanoclavine-I aldehyde to dihydrochanoclavine-I aldehyde that spontaneously dehydrates to form 6,8-dimethyl-6,7-didehydroergoline. The festuclavine dehydrogenases ifgF1 and/or ifgF2 then catalyze the reduction of 6,8-dimethyl-6,7-didehydroergoline to form festuclavine. Hydrolysis of festuclavine by a yet undetermined cytochrome P450 monooxygenase (called ifgH) then leads to the formation of isofumigaclavine B which is in turn acetylated by ifgI to isofumigaclavine A. Penicillium roqueforti has interestingly at least two sets of genes for the consumption of chanoclavine-I aldehyde on three different loci, the OYEs ifgG/fgaOx3 and the festuclavine synthase homologs ifgF1/ifgF2. The reason for the duplication of these genes is unclear, probably to ensure the conversion of chanoclavine-I aldehyde by differential gene expression under various environmental conditions. In Penicillium roqueforti (strain FM164), this protein is Chanoclavine-I aldehyde reductase ifgG.